Reading from the N-terminus, the 264-residue chain is Thymidylate synthase (264 aa).

Arginine 21 lines the dUMP pocket. Histidine 51 is a (6R)-5,10-methylene-5,6,7,8-tetrahydrofolate binding site. Position 126–127 (126–127 (RR)) interacts with dUMP. Catalysis depends on cysteine 146, which acts as the Nucleophile. DUMP-binding positions include 166-169 (RSGD), asparagine 177, and 207-209 (HLY). A (6R)-5,10-methylene-5,6,7,8-tetrahydrofolate-binding site is contributed by aspartate 169. Alanine 263 lines the (6R)-5,10-methylene-5,6,7,8-tetrahydrofolate pocket.

It belongs to the thymidylate synthase family. Bacterial-type ThyA subfamily. Homodimer.

It is found in the cytoplasm. The catalysed reaction is dUMP + (6R)-5,10-methylene-5,6,7,8-tetrahydrofolate = 7,8-dihydrofolate + dTMP. It functions in the pathway pyrimidine metabolism; dTTP biosynthesis. In terms of biological role, catalyzes the reductive methylation of 2'-deoxyuridine-5'-monophosphate (dUMP) to 2'-deoxythymidine-5'-monophosphate (dTMP) while utilizing 5,10-methylenetetrahydrofolate (mTHF) as the methyl donor and reductant in the reaction, yielding dihydrofolate (DHF) as a by-product. This enzymatic reaction provides an intracellular de novo source of dTMP, an essential precursor for DNA biosynthesis. The chain is Thymidylate synthase from Brevibacillus brevis (strain 47 / JCM 6285 / NBRC 100599).